The primary structure comprises 61 residues: Small ribosomal subunit protein uS14 (61 aa).

Zn(2+) contacts are provided by Cys24, Cys27, Cys40, and Cys43.

The protein belongs to the universal ribosomal protein uS14 family. Zinc-binding uS14 subfamily. Part of the 30S ribosomal subunit. Contacts proteins S3 and S10. Zn(2+) serves as cofactor.

In terms of biological role, binds 16S rRNA, required for the assembly of 30S particles and may also be responsible for determining the conformation of the 16S rRNA at the A site. The sequence is that of Small ribosomal subunit protein uS14 from Campylobacter curvus (strain 525.92).